Consider the following 509-residue polypeptide: SH2 domain-containing adapter protein B (509 aa).

Disordered stretches follow at residues 1–103 and 144–178; these read MAKW…GSSL and SGAG…EVRY. Residues 1 to 410 form a mediates interaction with LAT, PTK2/FAK1, JAK1 and JAK3 region; it reads MAKWLNKYFS…PAVPLEKQIW (410 aa). Residues 44–61 are compositionally biased toward low complexity; sequence VPQASSAASASCGPATAS. The segment covering 62 to 79 has biased composition (polar residues); it reads CFSASSGSLPDDSGSTSD. A Phosphoserine modification is found at Ser102. The span at 144–158 shows a compositional bias: low complexity; sequence SGAGAAASSSSSSGS. A Glycyl lysine isopeptide (Lys-Gly) (interchain with G-Cter in SUMO2) cross-link involves residue Lys187. Residues 229-385 are disordered; the sequence is AEESGAGKKD…APGGGFKPIK (157 aa). 2 stretches are compositionally biased toward basic and acidic residues: residues 233–242 and 250–262; these read GAGKKDKVTI and FDAK…KAGK. Residues Ser307 and Ser317 each carry the phosphoserine modification. The span at 307–317 shows a compositional bias: polar residues; sequence SVDSDSESTVS. Residues 319–334 are compositionally biased toward basic and acidic residues; sequence RLRESKLPQDDDRPAD. Phosphoserine is present on Ser388. Residues 410-504 enclose the SH2 domain; the sequence is WYHGAISRGD…AEHLSLLYPV (95 aa).

As to quaternary structure, interacts with PTPN11. Interacts with phosphorylated 'Tyr-720' of the ligand-activated receptor PDGFRA via its SH2 domain. Interacts with the ligand-activated receptors PDGFRB, FGFR1, KDR/VEGFR2, IL2RB and IL2RG. Interacts with EPS8 and V-SRC. Interacts with GRB2 and GRAP. Interacts with CD3Z. Interacts with tyrosine-phosphorylated LAT upon T-cell antigen receptor activation. Interacts with PLCG1. Interacts with ZAP70, LCP2/SLP-76, VAV1 and GRAP2. Interacts with JAK1 and JAK3. Interacts with PTK2/FAK1. Interacts with CRK/CrKII. Interacts with IRS2. In terms of processing, phosphorylated upon PDGFRA, PDGFRB, TCR, IL2 receptor, FGFR1 or VEGFR2 activation. Widely expressed.

It localises to the cytoplasm. Its subcellular location is the cell membrane. Adapter protein which regulates several signal transduction cascades by linking activated receptors to downstream signaling components. May play a role in angiogenesis by regulating FGFR1, VEGFR2 and PDGFR signaling. May also play a role in T-cell antigen receptor/TCR signaling, interleukin-2 signaling, apoptosis and neuronal cells differentiation by mediating basic-FGF and NGF-induced signaling cascades. May also regulate IRS1 and IRS2 signaling in insulin-producing cells. This Homo sapiens (Human) protein is SH2 domain-containing adapter protein B (SHB).